We begin with the raw amino-acid sequence, 100 residues long: Integration host factor subunit alpha (100 aa).

A disordered region spans residues 53–72; the sequence is FDLRDKRQRPGRNPKTGEEI.

This sequence belongs to the bacterial histone-like protein family. Heterodimer of an alpha and a beta chain.

In terms of biological role, this protein is one of the two subunits of integration host factor, a specific DNA-binding protein that functions in genetic recombination as well as in transcriptional and translational control. This Pseudomonas entomophila (strain L48) protein is Integration host factor subunit alpha.